The chain runs to 241 residues: Carboxy-S-adenosyl-L-methionine synthase (241 aa).

Residues Tyr38, 63–65, 88–89, 116–117, Asn131, and Arg198 each bind S-adenosyl-L-methionine; these read GCS, DN, and DI.

Belongs to the class I-like SAM-binding methyltransferase superfamily. Cx-SAM synthase family. In terms of assembly, homodimer.

The catalysed reaction is prephenate + S-adenosyl-L-methionine = carboxy-S-adenosyl-L-methionine + 3-phenylpyruvate + H2O. Functionally, catalyzes the conversion of S-adenosyl-L-methionine (SAM) to carboxy-S-adenosyl-L-methionine (Cx-SAM). The polypeptide is Carboxy-S-adenosyl-L-methionine synthase (Haemophilus influenzae (strain PittGG)).